A 270-amino-acid polypeptide reads, in one-letter code: Tryptophan synthase alpha chain (270 aa).

Residues Glu-49 and Asp-60 each act as proton acceptor in the active site.

This sequence belongs to the TrpA family. As to quaternary structure, tetramer of two alpha and two beta chains.

It carries out the reaction (1S,2R)-1-C-(indol-3-yl)glycerol 3-phosphate + L-serine = D-glyceraldehyde 3-phosphate + L-tryptophan + H2O. It participates in amino-acid biosynthesis; L-tryptophan biosynthesis; L-tryptophan from chorismate: step 5/5. In terms of biological role, the alpha subunit is responsible for the aldol cleavage of indoleglycerol phosphate to indole and glyceraldehyde 3-phosphate. This Thermobifida fusca (strain YX) protein is Tryptophan synthase alpha chain.